The following is a 375-amino-acid chain: Neuropeptide Y receptor type 4 (375 aa).

At 1-39 (MNTSHFLAPLFPGSLQGKNGTNPLDSPYNFSDGCQDSAE) the chain is on the extracellular side. N-linked (GlcNAc...) asparagine glycosylation is found at Asn2, Asn19, and Asn29. Residues 40-60 (LLAFIITTYSIETILGVLGNL) form a helical membrane-spanning segment. Residues 61 to 78 (CLIFVTTRQKEKSNVTNL) are Cytoplasmic-facing. Residues 79-99 (LIANLAFSDFLMCLICQPLTV) traverse the membrane as a helical segment. Topologically, residues 100–116 (TYTIMDYWIFGEVLCKM) are extracellular. The cysteines at positions 114 and 201 are disulfide-linked. A helical membrane pass occupies residues 117-137 (LTFIQCMSVTVSILSLVLVAL). The Cytoplasmic portion of the chain corresponds to 138 to 155 (ERHQLIINPTGWKPSIFQ). Residues 156 to 176 (AYLGIVVIWFVSCFLSLPFLA) traverse the membrane as a helical segment. The Extracellular segment spans residues 177 to 211 (NSTLNDLFHYNHSKVVEFLEDKVVCFVSWSSDHHR). N-linked (GlcNAc...) asparagine glycosylation occurs at Asn187. The helical transmembrane segment at 212–232 (LIYTTFLLLFQYCIPLAFILV) threads the bilayer. At 233–266 (CYIRIYQRLQRQKHVFHAHACSSRAGQMKRINSM) the chain is on the cytoplasmic side. A helical membrane pass occupies residues 267-287 (LMTMVTAFAVLWLPLHVFNTL). The Extracellular segment spans residues 288-301 (EDWYQEAIPACHGN). The helical transmembrane segment at 302–322 (LIFLMCHLLAMASTCVNPFIY) threads the bilayer. The Cytoplasmic portion of the chain corresponds to 323-375 (GFLNINFKKDIKALVLTCHCRSPRGESEHLPLSTVHTDLSKGSMRMGSKSNFI). Cys340 carries the S-palmitoyl cysteine lipid modification.

This sequence belongs to the G-protein coupled receptor 1 family. In terms of tissue distribution, heart, detected in small intestine.

The protein resides in the cell membrane. In terms of biological role, g protein-coupled receptor for PPY/pancreatic polypeptide/PP that is negatively coupled to cAMP. Has much lower affinity for the NPY/neuropeptide Y and PYY/peptide YY. In Mus musculus (Mouse), this protein is Neuropeptide Y receptor type 4 (Npy4r).